Here is a 194-residue protein sequence, read N- to C-terminus: Probable chorismate pyruvate-lyase (194 aa).

The substrate site is built by R77, L115, and E176.

It belongs to the UbiC family.

The protein resides in the cytoplasm. The catalysed reaction is chorismate = 4-hydroxybenzoate + pyruvate. The protein operates within cofactor biosynthesis; ubiquinone biosynthesis. Removes the pyruvyl group from chorismate, with concomitant aromatization of the ring, to provide 4-hydroxybenzoate (4HB) for the ubiquinone pathway. The protein is Probable chorismate pyruvate-lyase of Cupriavidus pinatubonensis (strain JMP 134 / LMG 1197) (Cupriavidus necator (strain JMP 134)).